The following is a 737-amino-acid chain: Catalase-peroxidase (737 aa).

The tract at residues 1 to 33 (MPEATEHPPIGEAQTEPAQSGCPMVIKPPVEGG) is disordered. Positions 107-235 (WHAAGTYRVQ…LGASHMGLIY (129 aa)) form a cross-link, tryptophyl-tyrosyl-methioninium (Trp-Tyr) (with M-261). Catalysis depends on H108, which acts as the Proton acceptor. A cross-link (tryptophyl-tyrosyl-methioninium (Tyr-Met) (with W-107)) is located at residues 235–261 (YVNPEGPEGNPDPIAAAIDIRETFGRM). Position 276 (H276) interacts with heme.

It belongs to the peroxidase family. Peroxidase/catalase subfamily. As to quaternary structure, homodimer or homotetramer. The cofactor is heme b. In terms of processing, formation of the three residue Trp-Tyr-Met cross-link is important for the catalase, but not the peroxidase activity of the enzyme.

The enzyme catalyses H2O2 + AH2 = A + 2 H2O. It carries out the reaction 2 H2O2 = O2 + 2 H2O. Bifunctional enzyme with both catalase and broad-spectrum peroxidase activity. May play a role in polycyclic aromatic hydrocarbon (PAH) metabolism. This Mycolicibacterium vanbaalenii (Mycobacterium vanbaalenii) protein is Catalase-peroxidase.